A 244-amino-acid polypeptide reads, in one-letter code: 6-carboxyhexanoate--CoA ligase (244 aa).

The protein belongs to the BioW family. Homodimer. Requires Mg(2+) as cofactor.

The enzyme catalyses heptanedioate + ATP + CoA = 6-carboxyhexanoyl-CoA + AMP + diphosphate. Its pathway is metabolic intermediate metabolism; pimeloyl-CoA biosynthesis; pimeloyl-CoA from pimelate: step 1/1. In terms of biological role, catalyzes the transformation of pimelate into pimeloyl-CoA with concomitant hydrolysis of ATP to AMP. The protein is 6-carboxyhexanoate--CoA ligase of Methanococcus maripaludis (strain C6 / ATCC BAA-1332).